We begin with the raw amino-acid sequence, 190 residues long: FUN14 domain-containing protein 2 (190 aa).

Over residues 1 to 13 (METSTQRTGSHLA) the composition is skewed to polar residues. The tract at residues 1–31 (METSTQRTGSHLAQTAAARHSASSRGEAARV) is disordered. Residues 1–81 (METSTQRTGS…GQESGPSAEK (81 aa)) are Cytoplasmic-facing. 2 positions are modified to phosphoserine: Ser10 and Ser54. A helical membrane pass occupies residues 82–102 (YSVATQLLIGGVTGWCTGFIF). The Mitochondrial intermembrane portion of the chain corresponds to 103-108 (QKVGKL). The chain crosses the membrane as a helical span at residues 109–129 (AATAVGGGFFLLQLANHTGYI). Residues 130–165 (KVDWQRVEKDMKKAKEQLKIRKSNQIPTEVKSKAEE) are Cytoplasmic-facing. Ser152 is subject to Phosphoserine. The helical transmembrane segment at 166 to 186 (VVSFVKKNVLVTGGFFGGFLL) threads the bilayer. Residues 187-190 (GMAS) lie on the Mitochondrial intermembrane side of the membrane.

This sequence belongs to the FUN14 family.

It localises to the mitochondrion outer membrane. It is found in the nucleus. Binds directly and specifically 1,2-Diacyl-sn-glycero-3-phospho-(1'-myo-inositol-3',4',5'-bisphosphate) (PIP3) leading to the recruitment of PIP3 to mitochondria and may play a role in the regulation of the platelet activation via AKT/GSK3B/cGMP signaling pathways. May act as transcription factor that regulates SREBP1 (isoform SREBP-1C) expression in order to modulate triglyceride (TG) homeostasis in hepatocytes. The protein is FUN14 domain-containing protein 2 of Bos taurus (Bovine).